The primary structure comprises 139 residues: Putative pre-16S rRNA nuclease (139 aa).

It belongs to the YqgF nuclease family.

The protein localises to the cytoplasm. Could be a nuclease involved in processing of the 5'-end of pre-16S rRNA. This Rubrobacter xylanophilus (strain DSM 9941 / JCM 11954 / NBRC 16129 / PRD-1) protein is Putative pre-16S rRNA nuclease.